The primary structure comprises 552 residues: Cilia- and flagella- associated protein 210 (552 aa).

4 coiled-coil regions span residues 53 to 143 (DEWK…NAKQ), 186 to 307 (EEQL…KKRL), 348 to 409 (IARD…VMKA), and 460 to 488 (TEALVAEKEKEFQDYAREVIELESETTNK). The tract at residues 216–238 (KDHLKQIKEHEEEEERRKKYEEK) is disordered.

Microtubule inner protein component of sperm flagellar doublet microtubules. In terms of tissue distribution, expressed in airway epithelial cells.

The protein localises to the cytoplasm. It localises to the cytoskeleton. The protein resides in the cilium axoneme. Its subcellular location is the flagellum axoneme. Microtubule inner protein (MIP) part of the dynein-decorated doublet microtubules (DMTs) in cilia axoneme, which is required for motile cilia beating. The protein is Cilia- and flagella- associated protein 210 of Homo sapiens (Human).